Reading from the N-terminus, the 745-residue chain is Jacalin-related lectin 4 (745 aa).

Jacalin-type lectin domains are found at residues 2 to 148 (AQKL…YFAP), 151 to 294 (PTKF…YFSP), 307 to 448 (AEKL…YFVT), 451 to 594 (PTKF…YFSR), and 601 to 744 (AETL…YVMP).

Belongs to the jacalin lectin family.

The sequence is that of Jacalin-related lectin 4 (JAL4) from Arabidopsis thaliana (Mouse-ear cress).